The chain runs to 1299 residues: Sophorolipid transporter (1299 aa).

Residues 1-64 (MVDDIQVEKR…FCTPLDVFLE (64 aa)) lie on the Cytoplasmic side of the membrane. Residues 65–85 (ILALFFAAVHGAALPMFTLVV) traverse the membrane as a helical segment. One can recognise an ABC transmembrane type-1 1 domain in the interval 65-356 (ILALFFAAVH…IAPNVRFLVK (292 aa)). Residues 86 to 114 (GAIFNTFRDFTSYDLKGNEFQHKVNHLSL) are Extracellular-facing. Residues 115–135 (YFVYIGIGMLGSAFLESFLLV) traverse the membrane as a helical segment. Residues 136-187 (DRGEVLAGRYRKHYLSAVIRQNIAFYDKLGGGEVSTRIINDTNSIQEAISDK) are Cytoplasmic-facing. A helical membrane pass occupies residues 188–208 (LGNVVQGIASFIAATVISFAS). The Extracellular segment spans residues 209 to 214 (QWKLAC). Residues 215–235 (ILLSAVGFMVITMGTGATFMA) traverse the membrane as a helical segment. Residues 236 to 293 (KYQLRSDAIYSQSGATVAEEALSAVRTTVAFGAQPHLAVKYEKVLDRVVKESKRSSYS) are Cytoplasmic-facing. A helical transmembrane segment spans residues 294 to 314 (LGVMLACIWASTFWVYALALW). Residues 315–326 (QGSREIVSGSAD) lie on the Extracellular side of the membrane. The helical transmembrane segment at 327–347 (VGKIIVVITAMLLGSFQLGNI) threads the bilayer. Residues 348 to 725 (APNVRFLVKG…WGLNRKEWGY (378 aa)) lie on the Cytoplasmic side of the membrane. Positions 393–638 (IELKNVKFRY…EGPYKALVDA (246 aa)) constitute an ABC transporter 1 domain. 428 to 435 (GASGSGKS) is a binding site for ATP. Residues 681 to 690 (SAGTQTTQPP) show a composition bias toward polar residues. Residues 681–703 (SAGTQTTQPPEYQENDIPGVRNP) are disordered. The helical transmembrane segment at 726-746 (ILIGSLASIILGYCYPAMAII) threads the bilayer. An ABC transmembrane type-1 2 domain is found at 727-1016 (LIGSLASIIL…IFSYAPNMNS (290 aa)). Residues 747–769 (TGQTTGSMVLPPSEYGKMRHVVN) are Extracellular-facing. Residues 770 to 790 (IMGWWYFFVGCISFMTAFITI) traverse the membrane as a helical segment. Residues 791–848 (AALSLASDKLVKNIRLALFRQLMRMDIAFFDHKNNTPGALTSILAKEAKMIEGLSGAT) lie on the Cytoplasmic side of the membrane. The helical transmembrane segment at 849–869 (LGQIQQSLVTLIGGIVTGIPF) threads the bilayer. The Extracellular portion of the chain corresponds to 870-874 (NWRIG). The helical transmembrane segment at 875-895 (LVATSVVPVMLVCGFVRVWVL) threads the bilayer. At 896 to 954 (TQLSDRAREVYERSGSMASEYTSAVRTVQSLTRELDVVVKYTKTVDSQIFSSRIAIARS) the chain is on the cytoplasmic side. The helical transmembrane segment at 955–975 (ALYYALSEGMTPWVVALVFWW) threads the bilayer. The Extracellular segment spans residues 976–987 (GSTVMRRGEASV). The chain crosses the membrane as a helical span at residues 988 to 1008 (AGYMTVFMAIITGSQAAGQIF). At 1009 to 1299 (SYAPNMNSAK…LVNLQGLGEI (291 aa)) the chain is on the cytoplasmic side. Residues 1053–1293 (IEFRHVNFRY…NGWYAELVNL (241 aa)) form the ABC transporter 2 domain. 1088–1095 (GASGCGKS) serves as a coordination point for ATP.

It belongs to the ABC transporter superfamily. ABCB family. Multidrug resistance exporter (TC 3.A.1.201) subfamily.

Its subcellular location is the cell membrane. Its function is as follows. Transports acidic acylated and non-acylated sophorolipids (SLs) into the extracellular space, where they can be lactonized by lactone esterase. The polypeptide is Sophorolipid transporter (mdr) (Starmerella bombicola (Yeast)).